A 305-amino-acid chain; its full sequence is UDP-3-O-acyl-N-acetylglucosamine deacetylase (305 aa).

The Zn(2+) site is built by histidine 79, histidine 238, and aspartate 242. Histidine 265 functions as the Proton donor in the catalytic mechanism.

Belongs to the LpxC family. The cofactor is Zn(2+).

It carries out the reaction a UDP-3-O-[(3R)-3-hydroxyacyl]-N-acetyl-alpha-D-glucosamine + H2O = a UDP-3-O-[(3R)-3-hydroxyacyl]-alpha-D-glucosamine + acetate. It functions in the pathway glycolipid biosynthesis; lipid IV(A) biosynthesis; lipid IV(A) from (3R)-3-hydroxytetradecanoyl-[acyl-carrier-protein] and UDP-N-acetyl-alpha-D-glucosamine: step 2/6. Catalyzes the hydrolysis of UDP-3-O-myristoyl-N-acetylglucosamine to form UDP-3-O-myristoylglucosamine and acetate, the committed step in lipid A biosynthesis. This is UDP-3-O-acyl-N-acetylglucosamine deacetylase from Salmonella paratyphi A (strain ATCC 9150 / SARB42).